The primary structure comprises 398 residues: Flavin-containing monooxygenase ustF1 (398 aa).

A signal peptide spans 1 to 22; it reads MTVSQVRRVAVIGAGISGVVST. 13-18 is a binding site for FAD; sequence GAGISG. N-linked (GlcNAc...) asparagine glycosylation is found at Asn53, Asn57, Asn119, and Asn126. 194–199 is an NADP(+) binding site; that stretch reads GGGVSS. 3 N-linked (GlcNAc...) asparagine glycosylation sites follow: Asn236, Asn243, and Asn271.

The protein belongs to the FMO family.

The protein operates within mycotoxin biosynthesis. In terms of biological role, flavin-containing monooxygenase; part of the gene cluster that mediates the biosynthesis of the secondary metabolite ustiloxin B, an antimitotic tetrapeptide. First, ustA is processed by the subtilisin-like endoprotease Kex2 that is outside the ustiloxin B gene cluster, at the C-terminal side of Arg-Lys, after transfer to Golgi apparatus through the endoplasmic reticulum (ER). Cleavage by KEX2 generates 16 peptides YAIG-I to YAIG-XVI. To process the precursor peptide further, at least two peptidases are necessary to cleave the N-terminal and C-terminal sides of the Tyr-Ala-Ile-Gly core peptide which serves as backbone for the synthesis of ustiloxin B, through cyclization and modification of the tyrosine with a non-protein coding amino acid, norvaline. One of the two peptidases must be the serine peptidase ustP; and the other pepdidase is probably ustH. Macrocyclization of the core peptide derived from ustA requires the tyrosinase ustQ, as well as the homologous oxidases ustYa and ustYb, and leads to the production of the first cyclization product N-desmethylustiloxin F. For the formation of N-desmethylustiloxin F, three oxidation steps are required, hydroxylation at the benzylic position, hydroxylation at either the aromatic ring of Tyr or beta-position of Ile, and oxidative cyclization. UstQ may catalyze the oxidation of a phenol moiety, whereas the ustYa and ustYb are most likely responsible for the remaining two-step oxidations. N-desmethylustiloxin F is then methylated by ustM to yield ustiloxin F which in turn substrate of the cytochrome P450 monooxygenase ustC which catalyzes the formation of S-deoxyustiloxin H. The flavoprotein monooxygenases ustF1 and ustF2 then participate in the modification of the side chain of S-deoxyustiloxin H, leading to the synthesis of an oxime intermediate, via ustiloxin H. Finally, carboxylative dehydration performed by the cysteine desulfurase-like protein ustD yields ustiloxin B. The protein is Flavin-containing monooxygenase ustF1 of Aspergillus flavus (strain ATCC 200026 / FGSC A1120 / IAM 13836 / NRRL 3357 / JCM 12722 / SRRC 167).